Here is an 892-residue protein sequence, read N- to C-terminus: Translation initiation factor IF-2 (892 aa).

The interval 88–305 (KKRTFVKRDP…SLQQGFQKPA (218 aa)) is disordered. Composition is skewed to basic and acidic residues over residues 93-159 (VKRD…KDKV) and 166-216 (DMTK…EENK). The span at 254–269 (GRGRNAKAARPAKKGK) shows a compositional bias: basic residues. The segment covering 270 to 282 (HAESKADREEARA) has biased composition (basic and acidic residues). The tr-type G domain maps to 391–560 (PRAPVVTIMG…LLQAEVLELK (170 aa)). Positions 400–407 (GHVDHGKT) are G1. 400–407 (GHVDHGKT) is a GTP binding site. A G2 region spans residues 425–429 (GITQH). Residues 446 to 449 (DTPG) are G3. GTP contacts are provided by residues 446 to 450 (DTPGH) and 500 to 503 (NKID). The segment at 500-503 (NKID) is G4. Positions 536–538 (SAK) are G5.

It belongs to the TRAFAC class translation factor GTPase superfamily. Classic translation factor GTPase family. IF-2 subfamily.

It localises to the cytoplasm. Functionally, one of the essential components for the initiation of protein synthesis. Protects formylmethionyl-tRNA from spontaneous hydrolysis and promotes its binding to the 30S ribosomal subunits. Also involved in the hydrolysis of GTP during the formation of the 70S ribosomal complex. The protein is Translation initiation factor IF-2 of Salmonella paratyphi A (strain ATCC 9150 / SARB42).